A 421-amino-acid polypeptide reads, in one-letter code: Testin (421 aa).

Residues Met-92 to Asp-199 form the PET domain. Positions Glu-133–Cys-164 are disordered. Positions Pro-155–Cys-164 are enriched in basic and acidic residues. LIM zinc-binding domains follow at residues Tyr-234–Glu-297, Pro-299–Val-359, and Gln-362–Ser-421.

This sequence belongs to the prickle / espinas / testin family. In terms of assembly, interacts via LIM domain 1 with ZYX. Interacts (via LIM domain 3) with ENAH and VASP. Interacts with ALKBH4, talin, actin, alpha-actinin, GRIP1 and PXN. Interacts (via LIM domain 2) with ACTL7A (via N-terminus). Heterodimer with ACTL7A; the heterodimer interacts with ENAH to form a heterotrimer.

It localises to the cytoplasm. It is found in the cell junction. The protein resides in the focal adhesion. Functionally, scaffold protein that may play a role in cell adhesion, cell spreading and in the reorganization of the actin cytoskeleton. Plays a role in the regulation of cell proliferation. May act as a tumor suppressor. The polypeptide is Testin (TES) (Equus caballus (Horse)).